The chain runs to 359 residues: Peptide chain release factor 1 (359 aa).

Gln236 bears the N5-methylglutamine mark.

Belongs to the prokaryotic/mitochondrial release factor family. Methylated by PrmC. Methylation increases the termination efficiency of RF1.

Its subcellular location is the cytoplasm. Peptide chain release factor 1 directs the termination of translation in response to the peptide chain termination codons UAG and UAA. The sequence is that of Peptide chain release factor 1 from Streptococcus thermophilus (strain ATCC BAA-250 / LMG 18311).